We begin with the raw amino-acid sequence, 170 residues long: Transcription factor E (170 aa).

Residues 1 to 93 (MKDAYLYVVE…AWYVDDEIIR (93 aa)) enclose the HTH TFE/IIEalpha-type domain.

This sequence belongs to the TFE family. In terms of assembly, monomer. Interaction with RNA polymerase subunits RpoF and RpoE is necessary for Tfe stimulatory transcription activity. Able to interact with Tbp and RNA polymerase in the absence of DNA promoter. Interacts both with the preinitiation and elongation complexes.

Functionally, transcription factor that plays a role in the activation of archaeal genes transcribed by RNA polymerase. Facilitates transcription initiation by enhancing TATA-box recognition by TATA-box-binding protein (Tbp), and transcription factor B (Tfb) and RNA polymerase recruitment. Not absolutely required for transcription in vitro, but particularly important in cases where Tbp or Tfb function is not optimal. It dynamically alters the nucleic acid-binding properties of RNA polymerases by stabilizing the initiation complex and destabilizing elongation complexes. Seems to translocate with the RNA polymerase following initiation and acts by binding to the non template strand of the transcription bubble in elongation complexes. The protein is Transcription factor E of Pyrobaculum arsenaticum (strain DSM 13514 / JCM 11321 / PZ6).